The primary structure comprises 396 residues: Elongation factor Tu 2 (396 aa).

Residues 10–206 (KPHVNVGTIG…ALDSYIPLPE (197 aa)) form the tr-type G domain. Positions 19–26 (GHVDHGKT) are G1. 19–26 (GHVDHGKT) contacts GTP. Thr26 is a Mg(2+) binding site. Residues 60–64 (GITIN) are G2. Residues 81 to 84 (DCPG) form a G3 region. Residues 81-85 (DCPGH) and 136-139 (NKCD) each bind GTP. The segment at 136 to 139 (NKCD) is G4. The segment at 174 to 176 (SAK) is G5.

Belongs to the TRAFAC class translation factor GTPase superfamily. Classic translation factor GTPase family. EF-Tu/EF-1A subfamily. As to quaternary structure, monomer.

It is found in the cytoplasm. It catalyses the reaction GTP + H2O = GDP + phosphate + H(+). GTP hydrolase that promotes the GTP-dependent binding of aminoacyl-tRNA to the A-site of ribosomes during protein biosynthesis. This is Elongation factor Tu 2 from Albidiferax ferrireducens (strain ATCC BAA-621 / DSM 15236 / T118) (Rhodoferax ferrireducens).